A 333-amino-acid polypeptide reads, in one-letter code: Eukaryotic translation initiation factor 2 subunit 2 (333 aa).

Disordered regions lie at residues 1–87 (MSGD…KSKK), 98–117 (IKDL…EEDL), and 141–165 (EKDE…QTGP). Serine 2 is modified (N-acetylserine). Serine 2 and serine 13 each carry phosphoserine. A compositionally biased stretch (basic residues) spans 13-22 (SKKKKKKKKP). Threonine 36 carries the phosphothreonine modification. Over residues 40–51 (ETKEVEPEPTED) the composition is skewed to basic and acidic residues. Serine 67 carries the post-translational modification Phosphoserine. Residue lysine 102 forms a Glycyl lysine isopeptide (Lys-Gly) (interchain with G-Cter in SUMO2) linkage. A Phosphoserine modification is found at serine 105. Residues 106–117 (DVQEPAEPEEDL) are compositionally biased toward acidic residues. Phosphoserine occurs at positions 158 and 218. N6-acetyllysine is present on residues lysine 265 and lysine 293. A C4-type zinc finger spans residues 281-305 (CHTCRSPDTILQKDTRLYFLQCETC).

This sequence belongs to the eIF-2-beta/eIF-5 family. As to quaternary structure, eukaryotic translation initiation factor 2 eIF2 is a heterotrimeric complex composed of an alpha (EIF2S1), a beta (EIF2S2) and a gamma (EIF2S3) chain. eIF2 is member of the 43S pre-initiation complex (43S PIC). eIF2 forms a complex with at least CELF1/CUGBP1, CALR, CALR3, EIF2S1, EIF2S2, HSP90B1 and HSPA5. Interacts with BZW2/5MP1. Interacts with EIF5.

The protein resides in the cytoplasm. The protein localises to the cytosol. Its function is as follows. Component of the eIF2 complex that functions in the early steps of protein synthesis by forming a ternary complex with GTP and initiator tRNA. This complex binds to a 40S ribosomal subunit, followed by mRNA binding to form a 43S pre-initiation complex (43S PIC). Junction of the 60S ribosomal subunit to form the 80S initiation complex is preceded by hydrolysis of the GTP bound to eIF2 and release of an eIF2-GDP binary complex. In order for eIF2 to recycle and catalyze another round of initiation, the GDP bound to eIF2 must exchange with GTP by way of a reaction catalyzed by eIF2B. The protein is Eukaryotic translation initiation factor 2 subunit 2 (EIF2S2) of Bos taurus (Bovine).